The primary structure comprises 1377 residues: Temperature-sensitive hemagglutinin tsh autotransporter (1377 aa).

A signal peptide spans 1–52 (MNRIYSLRYSAVARGFIAVSEFARKCVHKSVRRLCFPVLLLIPVLFSAGSLA). In terms of domain architecture, Peptidase S6 spans 53–302 (GTVNNELGYQ…AVIPLDFIGQ (250 aa)). Active-site charge relay system residues include His125, Asp153, and Ser259. The Autotransporter domain maps to 1111–1377 (DINGEAGTWV…AINANIRYSF (267 aa)).

Post-translationally, the C-terminus is blocked. Cleaved to release the mature protein from the outer membrane.

It is found in the periplasm. Its subcellular location is the secreted. It localises to the cell surface. The protein resides in the cell outer membrane. Its function is as follows. Contributes to the development of lesions and deposition of fibrin in the avian air sacs. It can act both as an adhesin and as a serine protease. Agglutinates erythrocytes while in contact with the extracellular surface of the bacterial cells. Can adhere to purified hemoglobin and bind with great efficiency to extracellular matrix proteins. Cleaves casein and exhibits mucinolytic activity. This is Temperature-sensitive hemagglutinin tsh autotransporter (tsh) from Escherichia coli.